A 267-amino-acid polypeptide reads, in one-letter code: uncharacterized protein (267 aa).

Residues 17 to 248 (LKVENLTKIF…PRDRTSIEFL (232 aa)) form the ABC transporter domain. 53–60 (GPSGCGKT) is an ATP binding site.

The protein belongs to the ABC transporter superfamily.

This is an uncharacterized protein from Methanocaldococcus jannaschii (strain ATCC 43067 / DSM 2661 / JAL-1 / JCM 10045 / NBRC 100440) (Methanococcus jannaschii).